The sequence spans 246 residues: Salivary antigen SP32 (246 aa).

Positions Met1–Ser23 are cleaved as a signal peptide. Residues Asp51–Pro160 are disordered. Basic and acidic residues predominate over residues Val65–Arg78. Residues Gln79–Arg124 are compositionally biased toward polar residues. Basic and acidic residues predominate over residues Gln141–Lys155.

As to quaternary structure, interacts with human DSG1. Interacts with human DSG3. Salivary gland (at protein level).

The protein localises to the secreted. Functionally, down-regulates the expression of CD86 and HLA-DR on the surface of lipopolysaccharide (LPS)-stimulated human peripheral blood mononuclear cells (PBMCs). Reduces LPS-induced secretion of IL-1beta/IL1B in human PBMCs. Reduces LPS-induced secretion of various cytokines, such as IL-1beta, TNF-alpha/TNF, MCP-1/CCL2, IL6, IL27 and IL-1alpha/IL1A, in host cultured macrophages probably via inhibition of NF-kappa-B signaling pathway. Reduces production of IFN-gamma/IFNG, IL4 and IL6 in human lymphocytes activated with PMA/ionomycin. Exhibits anti-inflammatory activity in carrageenan-induced paw edema model in rats. This Phlebotomus papatasi (Sandfly) protein is Salivary antigen SP32.